The sequence spans 73 residues: MLKIASLKKKDMQTKESCILKRPGLSCPPNKTKEVNESKQIFFLTWKNKATMKVSFIVAPTVMQVQCLFFFIL.

A helical transmembrane segment spans residues 54–72 (VSFIVAPTVMQVQCLFFFI).

The protein localises to the membrane. This is an uncharacterized protein from Saccharomyces cerevisiae (strain ATCC 204508 / S288c) (Baker's yeast).